Here is a 239-residue protein sequence, read N- to C-terminus: Orotidine 5'-phosphate decarboxylase (239 aa).

Residues Asp10, Lys32, 59–68 (DLKLHDIPNT), Thr122, Arg184, Gln193, Gly213, and Arg214 each bind substrate. The active-site Proton donor is the Lys61.

This sequence belongs to the OMP decarboxylase family. Type 1 subfamily. As to quaternary structure, homodimer.

The catalysed reaction is orotidine 5'-phosphate + H(+) = UMP + CO2. It participates in pyrimidine metabolism; UMP biosynthesis via de novo pathway; UMP from orotate: step 2/2. In terms of biological role, catalyzes the decarboxylation of orotidine 5'-monophosphate (OMP) to uridine 5'-monophosphate (UMP). This chain is Orotidine 5'-phosphate decarboxylase, found in Shouchella clausii (strain KSM-K16) (Alkalihalobacillus clausii).